A 682-amino-acid chain; its full sequence is Glucan endo-1,3-beta-glucosidase A1 (682 aa).

Positions 1–38 (MKPSHFTEKRFMKKVLGLFLVVVMLASVGVLPTSKVQA) are cleaved as a signal peptide. The region spanning 391 to 682 (YTFIGNPNAP…VDYVRVYKEQ (292 aa)) is the GH16 domain. E552 functions as the Nucleophile in the catalytic mechanism. The active-site Proton donor is the E557.

Belongs to the glycosyl hydrolase 16 family.

The protein localises to the secreted. The enzyme catalyses Hydrolysis of (1-&gt;3)-beta-D-glucosidic linkages in (1-&gt;3)-beta-D-glucans.. In terms of biological role, lysis of cellular walls containing beta-1,3-glucans. Implicated in the defense against fungal pathogens. The chain is Glucan endo-1,3-beta-glucosidase A1 (glcA) from Niallia circulans (Bacillus circulans).